The following is a 382-amino-acid chain: Queuine tRNA-ribosyltransferase (382 aa).

Aspartate 94 (proton acceptor) is an active-site residue. Substrate-binding positions include 94–98, aspartate 148, glutamine 192, and glycine 219; that span reads DSGGF. The tract at residues 250–256 is RNA binding; sequence GVGKPED. Aspartate 269 acts as the Nucleophile in catalysis. The segment at 274–278 is RNA binding; important for wobble base 34 recognition; it reads TRNAR. The Zn(2+) site is built by cysteine 307, cysteine 309, cysteine 312, and histidine 338.

This sequence belongs to the queuine tRNA-ribosyltransferase family. As to quaternary structure, homodimer. Within each dimer, one monomer is responsible for RNA recognition and catalysis, while the other monomer binds to the replacement base PreQ1. Zn(2+) serves as cofactor.

It carries out the reaction 7-aminomethyl-7-carbaguanine + guanosine(34) in tRNA = 7-aminomethyl-7-carbaguanosine(34) in tRNA + guanine. The protein operates within tRNA modification; tRNA-queuosine biosynthesis. Catalyzes the base-exchange of a guanine (G) residue with the queuine precursor 7-aminomethyl-7-deazaguanine (PreQ1) at position 34 (anticodon wobble position) in tRNAs with GU(N) anticodons (tRNA-Asp, -Asn, -His and -Tyr). Catalysis occurs through a double-displacement mechanism. The nucleophile active site attacks the C1' of nucleotide 34 to detach the guanine base from the RNA, forming a covalent enzyme-RNA intermediate. The proton acceptor active site deprotonates the incoming PreQ1, allowing a nucleophilic attack on the C1' of the ribose to form the product. After dissociation, two additional enzymatic reactions on the tRNA convert PreQ1 to queuine (Q), resulting in the hypermodified nucleoside queuosine (7-(((4,5-cis-dihydroxy-2-cyclopenten-1-yl)amino)methyl)-7-deazaguanosine). The polypeptide is Queuine tRNA-ribosyltransferase (Haemophilus ducreyi (strain 35000HP / ATCC 700724)).